The primary structure comprises 330 residues: Geranylgeranyl diphosphate synthase (330 aa).

Lys-43, Arg-46, and His-75 together coordinate isopentenyl diphosphate. Mg(2+) contacts are provided by Asp-82 and Asp-86. Arg-91 is an an all-trans-polyprenyl diphosphate binding site. An isopentenyl diphosphate-binding site is contributed by Arg-92. An all-trans-polyprenyl diphosphate contacts are provided by Lys-175, Thr-176, Gln-213, Lys-230, and Lys-240.

The protein belongs to the FPP/GGPP synthase family. Requires Mg(2+) as cofactor.

It carries out the reaction isopentenyl diphosphate + (2E,6E)-farnesyl diphosphate = (2E,6E,10E)-geranylgeranyl diphosphate + diphosphate. The protein operates within isoprenoid biosynthesis; geranylgeranyl diphosphate biosynthesis; geranylgeranyl diphosphate from farnesyl diphosphate and isopentenyl diphosphate: step 1/1. Catalyzes the condensation of isopentenyl pyrophosphate with the allylic pyrophosphates to yield geranylgeranyl diphosphate (GGPP) which is a precursor of the ether-linked lipids. It is able to use dimethylallyl diphosphate (DMAPP), geranyl diphosphate (GPP), and (all-E)-geranyl diphosphate (E-FPP) as an allylic substrate. This chain is Geranylgeranyl diphosphate synthase (gds), found in Sulfolobus acidocaldarius (strain ATCC 33909 / DSM 639 / JCM 8929 / NBRC 15157 / NCIMB 11770).